The primary structure comprises 223 residues: Probable iron-sulfur cluster repair protein HI_1677 (223 aa).

Belongs to the RIC family.

It localises to the cytoplasm. Di-iron-containing protein involved in the repair of iron-sulfur clusters. This is Probable iron-sulfur cluster repair protein HI_1677 from Haemophilus influenzae (strain ATCC 51907 / DSM 11121 / KW20 / Rd).